The chain runs to 110 residues: Red pigment-concentrating prohormone (110 aa).

A signal peptide spans 1-25 (MVRRTGVTLLVVALVVVALVSSVSA). Position 26 is a pyrrolidone carboxylic acid (Q26). W33 is modified (tryptophan amide).

This sequence belongs to the AKH/HRTH/RPCH family.

Its subcellular location is the secreted. In terms of biological role, this hormone adapts the animal to light backgrounds by stimulating concentration of the pigment of its red body-chromatophores. The sequence is that of Red pigment-concentrating prohormone from Carcinus maenas (Common shore crab).